The following is a 357-amino-acid chain: Dihydroflavonol 4-reductase (357 aa).

The NADP(+) site is built by Lys-49 and Tyr-168.

This sequence belongs to the NAD(P)-dependent epimerase/dehydratase family. Dihydroflavonol-4-reductase subfamily.

It catalyses the reaction a (2R,3S,4S)-leucoanthocyanidin + NADP(+) = a (2R,3R)-dihydroflavonol + NADPH + H(+). It carries out the reaction (2S)-flavan-4-ol + NADP(+) = (2S)-flavanone + NADPH + H(+). It participates in pigment biosynthesis; anthocyanin biosynthesis. Functionally, bifunctional enzyme involved in flavonoid metabolism. This chain is Dihydroflavonol 4-reductase (A1), found in Zea mays (Maize).